Reading from the N-terminus, the 237-residue chain is Ribonuclease 3 (237 aa).

The RNase III domain occupies 4-133 (LTELEKSLGV…VLAAIYLDKG (130 aa)). E46 is a binding site for Mg(2+). Catalysis depends on residues D50 and E122. E122 contacts Mg(2+). The DRBM domain maps to 160–229 (DYKSRLQELV…AKEALQQFEN (70 aa)).

It belongs to the ribonuclease III family. As to quaternary structure, homodimer. Mg(2+) serves as cofactor.

It localises to the cytoplasm. The catalysed reaction is Endonucleolytic cleavage to 5'-phosphomonoester.. Functionally, digests double-stranded RNA. Involved in the processing of primary rRNA transcript to yield the immediate precursors to the large and small rRNAs (23S and 16S). Processes some mRNAs, and tRNAs when they are encoded in the rRNA operon. Processes pre-crRNA and tracrRNA of type II CRISPR loci if present in the organism. This is Ribonuclease 3 from Dehalococcoides mccartyi (strain ATCC BAA-2266 / KCTC 15142 / 195) (Dehalococcoides ethenogenes (strain 195)).